The sequence spans 128 residues: Translation initiation factor 5A (128 aa).

Lys-35 carries the hypusine modification.

It belongs to the eIF-5A family.

It localises to the cytoplasm. Functions by promoting the formation of the first peptide bond. The chain is Translation initiation factor 5A (eif5a) from Methanosarcina mazei (strain ATCC BAA-159 / DSM 3647 / Goe1 / Go1 / JCM 11833 / OCM 88) (Methanosarcina frisia).